The sequence spans 566 residues: Cytochrome c oxidase subunit 1 (566 aa).

7 consecutive transmembrane segments (helical) span residues 29-49, 97-117, 141-161, 189-209, 227-247, 278-298, and 310-330; these read IGVLYLFTGGLVGLISVAFTV, VMITGHGILMMFFVVIPALFG, LSYWLYVAGTSLAVASLFAPG, LAIFAVHLSGASSILGAINMI, LFAWSIFVTAWLILLALPVLA, ILWFFGHPEVYIIVLPAFGIV, and IFGYLPMVYAMVAIGVLGFVV. Fe(II)-heme a is bound at residue H102. Cu cation is bound by residues H284 and Y288. The segment at residues 284-288 is a cross-link (1'-histidyl-3'-tyrosine (His-Tyr)); the sequence is HPEVY. Cu cation-binding residues include H333 and H334. 2 helical membrane-spanning segments follow: residues 348-368 and 381-401; these read FMMATMVIAVPTGIKIFSWIA and MLWALGFLFLFTVGGVTGIVL. H419 serves as a coordination point for heme a3. 3 consecutive transmembrane segments (helical) span residues 420 to 440, 455 to 475, and 499 to 519; these read FHYVMSLGAVFGIFAGIYFWI, LHFWMMFVGANLTFFPQHFLG, and LGAFLSFASFLFFLGVIFYTL. H421 contributes to the Fe(II)-heme a binding site. Residues 543–566 are disordered; that stretch reads TSPPPEHTFEQLPKREDWERAPAH. Residues 549–566 are compositionally biased toward basic and acidic residues; the sequence is HTFEQLPKREDWERAPAH.

It belongs to the heme-copper respiratory oxidase family. Cu(2+) serves as cofactor. The cofactor is heme.

It is found in the cell membrane. It catalyses the reaction 4 Fe(II)-[cytochrome c] + O2 + 8 H(+)(in) = 4 Fe(III)-[cytochrome c] + 2 H2O + 4 H(+)(out). It functions in the pathway energy metabolism; oxidative phosphorylation. In terms of biological role, cytochrome c oxidase is the component of the respiratory chain that catalyzes the reduction of oxygen to water. Subunits 1-3 form the functional core of the enzyme complex. Co I is the catalytic subunit of the enzyme. Electrons originating in cytochrome c are transferred via the copper A center of subunit 2 and heme a of subunit 1 to the bimetallic center formed by heme a3 and copper B. This cytochrome c oxidase shows proton pump activity across the membrane in addition to the electron transfer. The polypeptide is Cytochrome c oxidase subunit 1 (ctaD) (Cereibacter sphaeroides (Rhodobacter sphaeroides)).